The following is a 218-amino-acid chain: Octanoyltransferase (218 aa).

The region spanning 27–210 (TGGEDTLYLV…QFLAIFTHPA (184 aa)) is the BPL/LPL catalytic domain. Residues 72–79 (RGGNITCH), 139–141 (SIG), and 152–154 (GLA) contribute to the substrate site. Catalysis depends on C170, which acts as the Acyl-thioester intermediate.

It belongs to the LipB family.

It localises to the cytoplasm. The catalysed reaction is octanoyl-[ACP] + L-lysyl-[protein] = N(6)-octanoyl-L-lysyl-[protein] + holo-[ACP] + H(+). The protein operates within protein modification; protein lipoylation via endogenous pathway; protein N(6)-(lipoyl)lysine from octanoyl-[acyl-carrier-protein]: step 1/2. Functionally, catalyzes the transfer of endogenously produced octanoic acid from octanoyl-acyl-carrier-protein onto the lipoyl domains of lipoate-dependent enzymes. Lipoyl-ACP can also act as a substrate although octanoyl-ACP is likely to be the physiological substrate. The protein is Octanoyltransferase of Nitratidesulfovibrio vulgaris (strain ATCC 29579 / DSM 644 / CCUG 34227 / NCIMB 8303 / VKM B-1760 / Hildenborough) (Desulfovibrio vulgaris).